Reading from the N-terminus, the 609-residue chain is Aspartate--tRNA(Asp/Asn) ligase (609 aa).

Position 175 (E175) interacts with L-aspartate. Residues 199 to 202 (QQFK) form an aspartate region. Residues R221 and H468 each coordinate L-aspartate. 221–223 (RDE) is an ATP binding site. E502 is a binding site for ATP. R509 is an L-aspartate binding site. 554-557 (GIDR) lines the ATP pocket.

The protein belongs to the class-II aminoacyl-tRNA synthetase family. Type 1 subfamily. Homodimer.

The protein localises to the cytoplasm. The enzyme catalyses tRNA(Asx) + L-aspartate + ATP = L-aspartyl-tRNA(Asx) + AMP + diphosphate. Aspartyl-tRNA synthetase with relaxed tRNA specificity since it is able to aspartylate not only its cognate tRNA(Asp) but also tRNA(Asn). Reaction proceeds in two steps: L-aspartate is first activated by ATP to form Asp-AMP and then transferred to the acceptor end of tRNA(Asp/Asn). This is Aspartate--tRNA(Asp/Asn) ligase from Caulobacter sp. (strain K31).